A 187-amino-acid chain; its full sequence is MAPSLLLLSLPWPVRPGPLQRCWELLQRQLQQSWSRFVSPPWAPALAVQRPSILTELAHDTCENKENSSFLDSIFWMAAPKNRRTIEVNRCRRRNPQKLIKIKNNIDICPECGHLKQKHVLCGYCYEKVRQETTKIRQQIGAQEGGPFRAPSVETMVLYTGEKPSEKDQGKRIVERNIKRPSWFTQN.

Residues Cys109, Cys112, Cys122, and Cys125 each contribute to the Zn(2+) site.

Belongs to the bacterial ribosomal protein bL32 family. As to quaternary structure, component of the mitochondrial ribosome large subunit (39S) which comprises a 16S rRNA and about 50 distinct proteins. Post-translationally, MRPL32 precursor is processed by the m-AAA protease (composed of AFG3L2 and SPG7), which cleaves the N-terminal transit peptide. Cleavage by the m-AAA protease takes place prior to assembly into the large subunit, an essential step for mitochondrial ribosome (mitoribosome) assembly. Proper processing by the m-AAA protease is dependent on the zinc-binding region within the tightly folded C-terminal domain of MRPL32: zinc-dependent folding halts degradation initiated from the N-terminus and triggers the release of mature MRPL32.

It is found in the mitochondrion. Component of the mitochondrial large ribosomal subunit (mt-LSU). The mitochondrial ribosome (mitoribosome) is a large ribonucleoprotein complex responsible for the synthesis of proteins inside mitochondria. This Mus musculus (Mouse) protein is Large ribosomal subunit protein bL32m (Mrpl32).